The following is a 179-amino-acid chain: uncharacterized protein (179 aa).

This is an uncharacterized protein from Rickettsia conorii (strain ATCC VR-613 / Malish 7).